A 63-amino-acid polypeptide reads, in one-letter code: Sperm protamine P1 (63 aa).

Residues 1–63 (MARYRRHSRS…RYSRRGRRRY (63 aa)) are disordered.

It belongs to the protamine P1 family. As to expression, testis.

It is found in the nucleus. It localises to the chromosome. Protamines substitute for histones in the chromatin of sperm during the haploid phase of spermatogenesis. They compact sperm DNA into a highly condensed, stable and inactive complex. The chain is Sperm protamine P1 (PRM1) from Pseudantechinus macdonnellensis (Fat-tailed marsupial mouse).